A 218-amino-acid polypeptide reads, in one-letter code: Adenylate kinase (218 aa).

10-15 (GAGKGT) contributes to the ATP binding site. An NMP region spans residues 30–59 (STGDMLRAAVQAQTPVGIEAKKVMDAGKLV). AMP-binding positions include threonine 31, arginine 36, 57-59 (KLV), 85-88 (GFPR), and glutamine 92. Positions 122-159 (GRRVHLSSGRTYHVRFNPPKKEGLDDLTGEPLVQREDD) are LID. Residues arginine 123 and 132 to 133 (TY) each bind ATP. Positions 156 and 167 each coordinate AMP. Glycine 203 is a binding site for ATP.

This sequence belongs to the adenylate kinase family. Monomer.

It is found in the cytoplasm. The catalysed reaction is AMP + ATP = 2 ADP. The protein operates within purine metabolism; AMP biosynthesis via salvage pathway; AMP from ADP: step 1/1. In terms of biological role, catalyzes the reversible transfer of the terminal phosphate group between ATP and AMP. Plays an important role in cellular energy homeostasis and in adenine nucleotide metabolism. This chain is Adenylate kinase, found in Chlorobium phaeobacteroides (strain DSM 266 / SMG 266 / 2430).